A 277-amino-acid chain; its full sequence is Phosphatidylglycerol--prolipoprotein diacylglyceryl transferase (277 aa).

3 helical membrane-spanning segments follow: residues 17–37 (LAIHWYGLSYLAAFGLFMLLG), 63–83 (ILFLGVAGVVLGGRLGYCLFY), and 101–121 (GGMAFHGGLLGVIVAMLWFAH). An a 1,2-diacyl-sn-glycero-3-phospho-(1'-sn-glycerol)-binding site is contributed by Arg146. 3 consecutive transmembrane segments (helical) span residues 182 to 202 (SQVYQFLLEGLLLFVLLWLYA), 209 to 229 (GQVAAAFLVGYGVLRFIAEQF), and 234 to 254 (AFLGILALGMSMGQWLCLPMI).

Belongs to the Lgt family.

The protein resides in the cell inner membrane. It catalyses the reaction L-cysteinyl-[prolipoprotein] + a 1,2-diacyl-sn-glycero-3-phospho-(1'-sn-glycerol) = an S-1,2-diacyl-sn-glyceryl-L-cysteinyl-[prolipoprotein] + sn-glycerol 1-phosphate + H(+). The protein operates within protein modification; lipoprotein biosynthesis (diacylglyceryl transfer). In terms of biological role, catalyzes the transfer of the diacylglyceryl group from phosphatidylglycerol to the sulfhydryl group of the N-terminal cysteine of a prolipoprotein, the first step in the formation of mature lipoproteins. This Verminephrobacter eiseniae (strain EF01-2) protein is Phosphatidylglycerol--prolipoprotein diacylglyceryl transferase.